The chain runs to 337 residues: tRNA N6-adenosine threonylcarbamoyltransferase (337 aa).

Fe cation is bound by residues His111 and His115. Residues Leu134–Gly138, Asp167, Gly180, and Asn272 contribute to the substrate site. Asp300 serves as a coordination point for Fe cation.

Belongs to the KAE1 / TsaD family. Fe(2+) is required as a cofactor.

The protein resides in the cytoplasm. The catalysed reaction is L-threonylcarbamoyladenylate + adenosine(37) in tRNA = N(6)-L-threonylcarbamoyladenosine(37) in tRNA + AMP + H(+). In terms of biological role, required for the formation of a threonylcarbamoyl group on adenosine at position 37 (t(6)A37) in tRNAs that read codons beginning with adenine. Is involved in the transfer of the threonylcarbamoyl moiety of threonylcarbamoyl-AMP (TC-AMP) to the N6 group of A37, together with TsaE and TsaB. TsaD likely plays a direct catalytic role in this reaction. This chain is tRNA N6-adenosine threonylcarbamoyltransferase, found in Salmonella choleraesuis (strain SC-B67).